Here is a 211-residue protein sequence, read N- to C-terminus: Thiamine-phosphate synthase (211 aa).

4-amino-2-methyl-5-(diphosphooxymethyl)pyrimidine contacts are provided by residues 35–39 and asparagine 67; that span reads QLRDK. 2 residues coordinate Mg(2+): aspartate 68 and aspartate 87. Serine 106 provides a ligand contact to 4-amino-2-methyl-5-(diphosphooxymethyl)pyrimidine. 132-134 is a 2-[(2R,5Z)-2-carboxy-4-methylthiazol-5(2H)-ylidene]ethyl phosphate binding site; that stretch reads TGS. Lysine 135 is a 4-amino-2-methyl-5-(diphosphooxymethyl)pyrimidine binding site. 2-[(2R,5Z)-2-carboxy-4-methylthiazol-5(2H)-ylidene]ethyl phosphate-binding positions include glycine 163 and 183-184; that span reads IS.

The protein belongs to the thiamine-phosphate synthase family. Mg(2+) serves as cofactor.

It catalyses the reaction 2-[(2R,5Z)-2-carboxy-4-methylthiazol-5(2H)-ylidene]ethyl phosphate + 4-amino-2-methyl-5-(diphosphooxymethyl)pyrimidine + 2 H(+) = thiamine phosphate + CO2 + diphosphate. It carries out the reaction 2-(2-carboxy-4-methylthiazol-5-yl)ethyl phosphate + 4-amino-2-methyl-5-(diphosphooxymethyl)pyrimidine + 2 H(+) = thiamine phosphate + CO2 + diphosphate. The enzyme catalyses 4-methyl-5-(2-phosphooxyethyl)-thiazole + 4-amino-2-methyl-5-(diphosphooxymethyl)pyrimidine + H(+) = thiamine phosphate + diphosphate. Its pathway is cofactor biosynthesis; thiamine diphosphate biosynthesis; thiamine phosphate from 4-amino-2-methyl-5-diphosphomethylpyrimidine and 4-methyl-5-(2-phosphoethyl)-thiazole: step 1/1. Condenses 4-methyl-5-(beta-hydroxyethyl)thiazole monophosphate (THZ-P) and 2-methyl-4-amino-5-hydroxymethyl pyrimidine pyrophosphate (HMP-PP) to form thiamine monophosphate (TMP). The polypeptide is Thiamine-phosphate synthase (Methanoculleus marisnigri (strain ATCC 35101 / DSM 1498 / JR1)).